An 859-amino-acid chain; its full sequence is Collagen alpha-1(II) chain (859 aa).

Positions 1–607 (LQGLPGKDGE…LGQTEKGPDP (607 aa)) are disordered. Residues Pro-31 and Pro-40 each carry the 4-hydroxyproline modification. The residue at position 42 (Pro-42) is a 3-hydroxyproline. Residues Pro-43 and Pro-46 each carry the 4-hydroxyproline modification. Positions 78 to 121 (ERGSPGAQGLQGPRGLPGTPGTDGPKGATGPAGPNGAQGPPGLQ) are enriched in low complexity. The segment covering 136–147 (KGDRGDVGEKGP) has biased composition (basic and acidic residues). Low complexity-rich tracts occupy residues 204–220 (PAGFAGPPGADGQPGAK) and 249–277 (PTGVTGPKGARGAQGPPGATGFPGAAGRV). At Pro-279 the chain carries 3-hydroxyproline. A compositionally biased stretch (pro residues) spans 279 to 292 (PPGPNGNPGPPGPP). A 4-hydroxyproline mark is found at Pro-280, Pro-286, and Pro-292. Over residues 306-321 (DAGPPGRAGDPGLQGP) the composition is skewed to low complexity. Positions 487–501 (RGDKGETGEAGERGL) are enriched in basic and acidic residues. A triple-helical region region spans residues 491–586 (GETGEAGERG…PGPPGPPGPP (96 aa)). Pro-516 is modified (3-hydroxyproline). Positions 520-529 (SGDQGAAGPA) are enriched in low complexity. Residue Pro-553 is modified to 4-hydroxyproline. Pro-558 bears the 3-hydroxyproline mark. Pro-559 carries the 4-hydroxyproline modification. The span at 570-586 (PAGPPGNPGPPGPPGPP) shows a compositional bias: pro residues. At Pro-573 the chain carries 3-hydroxyproline. Residues Pro-574 and Pro-577 each carry the 4-hydroxyproline modification. At Pro-579 the chain carries 3-hydroxyproline. 4-hydroxyproline occurs at positions 580 and 583. Pro-585 carries the post-translational modification 3-hydroxyproline. Pro-586 bears the 4-hydroxyproline mark. The nonhelical region (C-terminal) stretch occupies residues 587–613 (GTGIDMSAFAGLGQTEKGPDPIRYMRA). The propeptide at 614–859 (DEAAGGLRQH…GVDIGPVCFL (246 aa)) is C-terminal propeptide. The region spanning 625–859 (VEVDATLKSL…GVDIGPVCFL (235 aa)) is the Fibrillar collagen NC1 domain. 3 disulfides stabilise this stretch: Cys-655–Cys-687, Cys-695–Cys-857, and Cys-765–Cys-810. Residues Asp-673, Asn-675, Gln-676, Cys-678, and Asp-681 each contribute to the Ca(2+) site. Asn-760 is a glycosylation site (N-linked (GlcNAc...) asparagine).

The protein belongs to the fibrillar collagen family. As to quaternary structure, homotrimers of alpha 1(II) chains. Contains mostly 4-hydroxyproline. Prolines at the third position of the tripeptide repeating unit (G-X-P) are 4-hydroxylated in some or all of the chains. In terms of processing, contains 3-hydroxyproline at a few sites. This modification occurs on the first proline residue in the sequence motif Gly-Pro-Hyp, where Hyp is 4-hydroxyproline. Post-translationally, lysine residues at the third position of the tripeptide repeating unit (G-X-Y) are 5-hydroxylated in some or all of the chains. O-glycosylated on hydroxylated lysine residues. The O-linked glycan consists of a Glc-Gal disaccharide.

The protein localises to the secreted. It is found in the extracellular space. The protein resides in the extracellular matrix. Type II collagen is specific for cartilaginous tissues. It is essential for the normal embryonic development of the skeleton, for linear growth and for the ability of cartilage to resist compressive forces. This Gallus gallus (Chicken) protein is Collagen alpha-1(II) chain.